The chain runs to 266 residues: Glucosamine-6-phosphate deaminase (266 aa).

Aspartate 72 serves as the catalytic Proton acceptor; for enolization step. The For ring-opening step role is filled by aspartate 141. Histidine 143 functions as the Proton acceptor; for ring-opening step in the catalytic mechanism. Glutamate 148 serves as the catalytic For ring-opening step.

This sequence belongs to the glucosamine/galactosamine-6-phosphate isomerase family. NagB subfamily. Homohexamer.

The enzyme catalyses alpha-D-glucosamine 6-phosphate + H2O = beta-D-fructose 6-phosphate + NH4(+). It functions in the pathway amino-sugar metabolism; N-acetylneuraminate degradation; D-fructose 6-phosphate from N-acetylneuraminate: step 5/5. Allosterically activated by N-acetylglucosamine 6-phosphate (GlcNAc6P). Functionally, catalyzes the reversible isomerization-deamination of glucosamine 6-phosphate (GlcN6P) to form fructose 6-phosphate (Fru6P) and ammonium ion. The polypeptide is Glucosamine-6-phosphate deaminase (Klebsiella pneumoniae subsp. pneumoniae (strain ATCC 700721 / MGH 78578)).